Consider the following 220-residue polypeptide: CDP-diacylglycerol--inositol 3-phosphatidyltransferase (220 aa).

The Cytoplasmic segment spans residues 1–20 (MSSNSTPEKVTAEHVLWYIP). Residues 21–41 (NKIGYVRVITAALSFFVMKNH) traverse the membrane as a helical segment. Residues 42–45 (PTAF) lie on the Lumenal side of the membrane. A helical membrane pass occupies residues 46–66 (TWLYSTSCLLDALDGTMARKY). Aspartate 56 and aspartate 59 together coordinate Mg(2+). Residues glycine 60, arginine 64, and serine 70 each contribute to the a CDP-1,2-diacyl-sn-glycerol site. Residues 67 to 75 (NQVSSLGAV) are Cytoplasmic-facing. Residues 76–96 (LDMVTDRSSTAGLMCFLCVQY) traverse the membrane as a helical segment. The Mg(2+) site is built by aspartate 77 and aspartate 81. The active-site Proton acceptor is aspartate 81. At 97 to 98 (PQ) the chain is on the lumenal side. The chain crosses the membrane as a helical span at residues 99 to 119 (WCVFFQLMLGLDITSHYMHMY). Over 120 to 145 (ASLSAGKTSHKSVGEGESRLLHLYYT) the chain is Cytoplasmic. Residues 146–166 (RRDVLFTICAFNELFYAGLYL) form a helical membrane-spanning segment. Topologically, residues 167–170 (QLFS) are lumenal. Residues 171–191 (NSATFGKWTTIISFPGYVFKQ) traverse the membrane as a helical segment. Residues 192–220 (TANVVQLKRAALILADNDAKNANEKNKTY) are Cytoplasmic-facing.

The protein belongs to the CDP-alcohol phosphatidyltransferase class-I family. Mn(2+) is required as a cofactor. It depends on Mg(2+) as a cofactor.

Its subcellular location is the microsome membrane. It is found in the endoplasmic reticulum membrane. It localises to the golgi apparatus membrane. The protein localises to the mitochondrion outer membrane. It catalyses the reaction a CDP-1,2-diacyl-sn-glycerol + myo-inositol = a 1,2-diacyl-sn-glycero-3-phospho-(1D-myo-inositol) + CMP + H(+). Catalyzes the synthesis of phosphatidylinositol (PtdIns). The polypeptide is CDP-diacylglycerol--inositol 3-phosphatidyltransferase (Saccharomyces cerevisiae (strain ATCC 204508 / S288c) (Baker's yeast)).